Reading from the N-terminus, the 230-residue chain is Triggering receptor expressed on myeloid cells 1 (230 aa).

The N-terminal stretch at 1–20 is a signal peptide; sequence MRKAGLWGLLCVFFVSEVKA. The Ig-like V-type domain occupies 21 to 124; sequence AIVLEEERYD…IYHPPNDPVV (104 aa). Topologically, residues 21–202 are extracellular; it reads AIVLEEERYD…TDADSVSTSS (182 aa). C41 and C113 are disulfide-bonded. N191 carries an N-linked (GlcNAc...) asparagine glycan. Residues 203 to 223 traverse the membrane as a helical segment; sequence VTISVICGLLSKSLVFIILFI. The Cytoplasmic portion of the chain corresponds to 224–230; that stretch reads VTKRTFG.

As to quaternary structure, monomer. Homomultimer; when activated. Interacts with TYROBP/DAP12. Interacts with TLR4.

The protein localises to the cell membrane. In terms of biological role, cell surface receptor that plays important roles in innate and adaptive immunity by amplifying inflammatory responses. Upon activation by various ligands such as PGLYRP1, HMGB1 or HSP70, multimerizes and forms a complex with transmembrane adapter TYROBP/DAP12. In turn, initiates a SYK-mediated cascade of tyrosine phosphorylation, activating multiple downstream mediators such as BTK, MAPK1, MAPK3 or phospholipase C-gamma. This cascade promotes the neutrophil- and macrophage-mediated release of pro-inflammatory cytokines and/or chemokines, as well as their migration and thereby amplifies inflammatory responses that are triggered by bacterial and fungal infections. By also promoting the amplification of inflammatory signals that are initially triggered by Toll-like receptor (TLR) and NOD-like receptor engagement, plays a major role in the pathophysiology of acute and chronic inflammatory diseases of different etiologies including septic shock and atherosclerosis. The polypeptide is Triggering receptor expressed on myeloid cells 1 (Trem1) (Mus musculus (Mouse)).